The primary structure comprises 345 residues: Platelet-derived growth factor C (345 aa).

A signal peptide spans 1 to 22 (MLLFGFLLLTFALVSQRQGAEA). N-linked (GlcNAc...) asparagine glycosylation is found at Asn25 and Asn55. Residues 46–163 (HEKIITVSAN…PGFCIHYTLL (118 aa)) enclose the CUB domain. 4 disulfides stabilise this stretch: Cys104/Cys124, Cys250/Cys294, Cys280/Cys335, and Cys287/Cys337.

Belongs to the PDGF/VEGF growth factor family. In terms of assembly, homodimer; disulfide-linked. Interacts with PDGFRA homodimers, and with heterodimers formed by PDGFRA and PDGFRB. Proteolytic removal of the N-terminal CUB domain releasing the core domain is necessary for unmasking the receptor-binding epitopes of the core domain. Cleavage after basic residues in the hinge region (region connecting the CUB and growth factor domains) gives rise to the receptor-binding form.

It localises to the secreted. In terms of biological role, growth factor that plays an essential role in the regulation of embryonic development, cell proliferation, cell migration, survival and chemotaxis. Potent mitogen and chemoattractant for cells of mesenchymal origin. Required for normal skeleton formation during embryonic development. Required for normal skin morphogenesis during embryonic development. Plays an important role in wound healing, in angiogenesis and blood vessel development. This Gekko japonicus (Schlegel's Japanese gecko) protein is Platelet-derived growth factor C (PDGFC).